Reading from the N-terminus, the 211-residue chain is Imidazole glycerol phosphate synthase subunit HisH (211 aa).

Residues 3–211 (VIAVVDYEMG…VAQVREKIPA (209 aa)) enclose the Glutamine amidotransferase type-1 domain. Cys-81 (nucleophile) is an active-site residue. Catalysis depends on residues His-186 and Glu-188.

As to quaternary structure, heterodimer of HisH and HisF.

The protein resides in the cytoplasm. The enzyme catalyses 5-[(5-phospho-1-deoxy-D-ribulos-1-ylimino)methylamino]-1-(5-phospho-beta-D-ribosyl)imidazole-4-carboxamide + L-glutamine = D-erythro-1-(imidazol-4-yl)glycerol 3-phosphate + 5-amino-1-(5-phospho-beta-D-ribosyl)imidazole-4-carboxamide + L-glutamate + H(+). The catalysed reaction is L-glutamine + H2O = L-glutamate + NH4(+). Its pathway is amino-acid biosynthesis; L-histidine biosynthesis; L-histidine from 5-phospho-alpha-D-ribose 1-diphosphate: step 5/9. In terms of biological role, IGPS catalyzes the conversion of PRFAR and glutamine to IGP, AICAR and glutamate. The HisH subunit catalyzes the hydrolysis of glutamine to glutamate and ammonia as part of the synthesis of IGP and AICAR. The resulting ammonia molecule is channeled to the active site of HisF. The polypeptide is Imidazole glycerol phosphate synthase subunit HisH (Nostoc punctiforme (strain ATCC 29133 / PCC 73102)).